A 127-amino-acid chain; its full sequence is Large ribosomal subunit protein bL12 (127 aa).

This sequence belongs to the bacterial ribosomal protein bL12 family. In terms of assembly, homodimer. Part of the ribosomal stalk of the 50S ribosomal subunit. Forms a multimeric L10(L12)X complex, where L10 forms an elongated spine to which 2 to 4 L12 dimers bind in a sequential fashion. Binds GTP-bound translation factors.

Functionally, forms part of the ribosomal stalk which helps the ribosome interact with GTP-bound translation factors. Is thus essential for accurate translation. The chain is Large ribosomal subunit protein bL12 from Symbiobacterium thermophilum (strain DSM 24528 / JCM 14929 / IAM 14863 / T).